Here is a 378-residue protein sequence, read N- to C-terminus: Gibberellin 20 oxidase 2 (378 aa).

The segment covering methionine 1–proline 10 has biased composition (polar residues). Residues methionine 1 to threonine 26 form a disordered region. Over residues alanine 11 to glutamine 25 the composition is skewed to basic and acidic residues. The Fe2OG dioxygenase domain maps to glutamate 220–proline 320. Residues histidine 245, aspartate 247, and histidine 301 each contribute to the Fe cation site. Arginine 311 is an active-site residue.

Belongs to the iron/ascorbate-dependent oxidoreductase family. GA20OX subfamily. It depends on Fe(2+) as a cofactor. The cofactor is L-ascorbate. In terms of tissue distribution, expressed in inflorescence and developing siliques. Detected in seeds, roots, cotyledons and leaves. In seeds, specifically detected at the rim of the embryo and the outer integument.

It carries out the reaction gibberellin A12 + 2 2-oxoglutarate + 3 O2 + H(+) = gibberellin A9 + 2 succinate + 3 CO2 + 2 H2O. It catalyses the reaction gibberellin A12 + 2-oxoglutarate + O2 = gibberellin A15 + succinate + CO2. The enzyme catalyses gibberellin A15 + 2-oxoglutarate + O2 = gibberellin A24 + succinate + CO2 + H2O. The catalysed reaction is gibberellin A53 + 2-oxoglutarate + O2 = gibberellin A44 + succinate + CO2. It carries out the reaction gibberellin A12 + 3 2-oxoglutarate + 3 O2 = gibberellin A25 + 3 succinate + 3 CO2 + H2O + H(+). Its pathway is plant hormone biosynthesis; gibberellin biosynthesis. Its function is as follows. Key oxidase enzyme in the biosynthesis of gibberellin that catalyzes the conversion of GA12 to GA9, via a three-step oxidation at C-20 of the GA skeleton, and GA25 is also formed as a minor product. GA53 is less effectively oxidized than GA12 and is only oxidized one step to GA44. Involved in the promotion of the floral transition, fertility and silique elongation, but plays only a minor role in elongation of seedling organs. Acts redundantly with GA20OX1. In Arabidopsis thaliana (Mouse-ear cress), this protein is Gibberellin 20 oxidase 2 (GA20OX2).